Consider the following 162-residue polypeptide: Universal stress protein MJ0577 (162 aa).

Residues Pro-11, Val-41, 127-133, and 141-143 each bind ATP; these read GSHGKTN and SVT.

The protein belongs to the universal stress protein A family. As to quaternary structure, homodimer. The cofactor is Mn(2+).

It localises to the cytoplasm. This chain is Universal stress protein MJ0577, found in Methanocaldococcus jannaschii (strain ATCC 43067 / DSM 2661 / JAL-1 / JCM 10045 / NBRC 100440) (Methanococcus jannaschii).